Here is a 320-residue protein sequence, read N- to C-terminus: Malate dehydrogenase (320 aa).

NAD(+)-binding positions include 10-15 and Asp-34; that span reads GAGQIG. Residues Arg-83 and Arg-89 each contribute to the substrate site. NAD(+)-binding positions include Asn-96 and 119–121; that span reads ITN. Positions 121 and 152 each coordinate substrate. His-176 (proton acceptor) is an active-site residue.

It belongs to the LDH/MDH superfamily. MDH type 3 family.

It carries out the reaction (S)-malate + NAD(+) = oxaloacetate + NADH + H(+). Functionally, catalyzes the reversible oxidation of malate to oxaloacetate. The protein is Malate dehydrogenase of Jannaschia sp. (strain CCS1).